The following is a 377-amino-acid chain: Leucine aminopeptidase A (377 aa).

An N-terminal signal peptide occupies residues Met-1–Ala-18. A propeptide spanning residues Ile-19–Thr-79 is cleaved from the precursor. A glycan (N-linked (GlcNAc...) asparagine) is linked at Asn-87. The Zn(2+) site is built by His-176, Asp-195, Glu-234, and Asp-261. N-linked (GlcNAc...) asparagine glycosylation is present at Asn-288. Cys-310 and Cys-314 are joined by a disulfide. His-343 is a binding site for Zn(2+).

This sequence belongs to the peptidase M28 family. M28E subfamily. As to quaternary structure, monomer. The cofactor is Zn(2+).

It is found in the secreted. Its activity is regulated as follows. Calcium, magnesium and manganese cations reduce peptidase activity to 20.3-51.3 percent. The metal ion chelating reagent EDTA almost completely inhibits activity. The protease inhibitor bacitracin and the aminopeptidase B inhibitor bestatin, as well as DTT and beta-mercaptoethanol act also as lap A inhibitorsD. Functionally, extracellular aminopeptidase that allows assimilation of proteinaceous substrates. The protein is Leucine aminopeptidase A (lapA) of Aspergillus oryzae (strain ATCC 42149 / RIB 40) (Yellow koji mold).